Reading from the N-terminus, the 430-residue chain is Protein AST2 (430 aa).

Functionally, lipid raft-associated protein involved in the targeting of PMA1 from Golgi to the plasma membrane. May induce clustering of PMA1, which facilitates partition of PMA1 into lipid rafts after leaving the ER its and transport to the cell surface. This is Protein AST2 from Saccharomyces cerevisiae (strain ATCC 204508 / S288c) (Baker's yeast).